The chain runs to 544 residues: CTP synthase (544 aa).

The segment at 1-265 (MTKFIFVTGG…DNIITEQLQL (265 aa)) is amidoligase domain. Serine 13 provides a ligand contact to CTP. Serine 13 lines the UTP pocket. Residues 14 to 19 (SLGKGI) and aspartate 71 contribute to the ATP site. The Mg(2+) site is built by aspartate 71 and glutamate 139. CTP-binding positions include 146 to 148 (DIE), 186 to 191 (KTKPTQ), and lysine 222. UTP-binding positions include 186-191 (KTKPTQ) and lysine 222. One can recognise a Glutamine amidotransferase type-1 domain in the interval 290 to 544 (KIAMVGKYVD…VKAALNNKKA (255 aa)). Glycine 353 contributes to the L-glutamine binding site. Residue cysteine 380 is the Nucleophile; for glutamine hydrolysis of the active site. Residues 381–384 (LGMQ), glutamate 404, and arginine 471 each bind L-glutamine. Active-site residues include histidine 517 and glutamate 519.

The protein belongs to the CTP synthase family. In terms of assembly, homotetramer.

The catalysed reaction is UTP + L-glutamine + ATP + H2O = CTP + L-glutamate + ADP + phosphate + 2 H(+). It catalyses the reaction L-glutamine + H2O = L-glutamate + NH4(+). It carries out the reaction UTP + NH4(+) + ATP = CTP + ADP + phosphate + 2 H(+). Its pathway is pyrimidine metabolism; CTP biosynthesis via de novo pathway; CTP from UDP: step 2/2. Its activity is regulated as follows. Allosterically activated by GTP, when glutamine is the substrate; GTP has no effect on the reaction when ammonia is the substrate. The allosteric effector GTP functions by stabilizing the protein conformation that binds the tetrahedral intermediate(s) formed during glutamine hydrolysis. Inhibited by the product CTP, via allosteric rather than competitive inhibition. In terms of biological role, catalyzes the ATP-dependent amination of UTP to CTP with either L-glutamine or ammonia as the source of nitrogen. Regulates intracellular CTP levels through interactions with the four ribonucleotide triphosphates. The sequence is that of CTP synthase from Neisseria meningitidis serogroup C / serotype 2a (strain ATCC 700532 / DSM 15464 / FAM18).